The following is a 237-amino-acid chain: DNA repair protein RecO (237 aa).

It belongs to the RecO family.

Involved in DNA repair and RecF pathway recombination. The sequence is that of DNA repair protein RecO from Cereibacter sphaeroides (strain ATCC 17025 / ATH 2.4.3) (Rhodobacter sphaeroides).